We begin with the raw amino-acid sequence, 876 residues long: Probable galactinol--sucrose galactosyltransferase 4 (876 aa).

Phosphoserine is present on residues Ser-7 and Ser-9.

Belongs to the glycosyl hydrolases 36 family.

The catalysed reaction is alpha-D-galactosyl-(1-&gt;3)-1D-myo-inositol + sucrose = raffinose + myo-inositol. In terms of biological role, transglycosidase operating by a ping-pong reaction mechanism. Involved in the synthesis of raffinose, a major soluble carbohydrate in seeds, roots and tubers. The chain is Probable galactinol--sucrose galactosyltransferase 4 (RFS4) from Arabidopsis thaliana (Mouse-ear cress).